The sequence spans 206 residues: Urease accessory protein UreG (206 aa).

14-21 (GPVGSGKT) contacts GTP.

Belongs to the SIMIBI class G3E GTPase family. UreG subfamily. As to quaternary structure, homodimer. UreD, UreF and UreG form a complex that acts as a GTP-hydrolysis-dependent molecular chaperone, activating the urease apoprotein by helping to assemble the nickel containing metallocenter of UreC. The UreE protein probably delivers the nickel.

The protein localises to the cytoplasm. Facilitates the functional incorporation of the urease nickel metallocenter. This process requires GTP hydrolysis, probably effectuated by UreG. The chain is Urease accessory protein UreG from Brucella anthropi (strain ATCC 49188 / DSM 6882 / CCUG 24695 / JCM 21032 / LMG 3331 / NBRC 15819 / NCTC 12168 / Alc 37) (Ochrobactrum anthropi).